A 317-amino-acid chain; its full sequence is Melanocyte-stimulating hormone receptor (317 aa).

Over 1–37 (MPMHGAQRKLLGSLNSTPTATSNLGLAANHTGAPCLE) the chain is Extracellular. N-linked (GlcNAc...) asparagine glycosylation occurs at N29. A helical membrane pass occupies residues 38–63 (VSIPDGLFLSLGLVSLVENVLVVAAI). Topologically, residues 64-72 (AKNRNLHSS) are cytoplasmic. Residues 73-93 (MYCFICCLALSDLLVSGSNML) traverse the membrane as a helical segment. Residues 94-118 (ETAVILLLEAGALATRTSAMQQLHN) are Extracellular-facing. Residues 119–140 (TIDVLTCSSMLCSLCFLGAIAV) traverse the membrane as a helical segment. Topologically, residues 141 to 163 (DRYISIFYALRYHSIMTLPRAQR) are cytoplasmic. A helical transmembrane segment spans residues 164 to 183 (AIAAIWVASXLSSTLFITYY). Over 184 to 191 (DHAAVLLC) the chain is Extracellular. A helical membrane pass occupies residues 192–211 (LVVFFLAMLVLMAVLYVHML). The Cytoplasmic portion of the chain corresponds to 212–240 (ARACQHAHGIIRLHKRQTPAHQGFGLRGA). The helical transmembrane segment at 241-266 (ATLTILLGIFFLCWGPFFLHLTLVVF) threads the bilayer. At 267–279 (CPQHLTCSCIFKN) the chain is on the extracellular side. The helical transmembrane segment at 280-300 (FKVFLTLIICNTIIDPLIYAF) threads the bilayer. Over 301–317 (RSQELRRTLKEVLLCSW) the chain is Cytoplasmic. Residue C315 is the site of S-palmitoyl cysteine attachment.

The protein belongs to the G-protein coupled receptor 1 family. Interacts with MGRN1, but does not undergo MGRN1-mediated ubiquitination; this interaction competes with GNAS-binding and thus inhibits agonist-induced cAMP production. Interacts with OPN3; the interaction results in a decrease in MC1R-mediated cAMP signaling and ultimately a decrease in melanin production in melanocytes.

It is found in the cell membrane. Functionally, receptor for MSH (alpha, beta and gamma) and ACTH. The activity of this receptor is mediated by G proteins which activate adenylate cyclase. Mediates melanogenesis, the production of eumelanin (black/brown) and phaeomelanin (red/yellow), via regulation of cAMP signaling in melanocytes. This is Melanocyte-stimulating hormone receptor (MC1R) from Saguinus midas (Golden-handed tamarin).